The sequence spans 233 residues: Glucosamine-6-phosphate deaminase (233 aa).

Residue Asp62 is the Proton acceptor; for enolization step of the active site. The For ring-opening step role is filled by Asn128. His130 acts as the Proton acceptor; for ring-opening step in catalysis. Glu135 (for ring-opening step) is an active-site residue.

It belongs to the glucosamine/galactosamine-6-phosphate isomerase family. NagB subfamily.

It carries out the reaction alpha-D-glucosamine 6-phosphate + H2O = beta-D-fructose 6-phosphate + NH4(+). It functions in the pathway amino-sugar metabolism; N-acetylneuraminate degradation; D-fructose 6-phosphate from N-acetylneuraminate: step 5/5. Functionally, catalyzes the reversible isomerization-deamination of glucosamine 6-phosphate (GlcN6P) to form fructose 6-phosphate (Fru6P) and ammonium ion. The protein is Glucosamine-6-phosphate deaminase of Streptococcus thermophilus (strain ATCC BAA-491 / LMD-9).